The sequence spans 124 residues: MPTVNQLVRFGRQSVKKKSAAPALQGNPQKRGVCVVVRTTTPKKPNSALRKIARVRLTNGIEVTAYIPGIGHNLQEHSVVLVRGGRVKDLPGVRYKIIRGALDAAGVANRKQARSRYGAKKPKK.

The residue at position 89 (Asp89) is a 3-methylthioaspartic acid.

It belongs to the universal ribosomal protein uS12 family. As to quaternary structure, part of the 30S ribosomal subunit. Contacts proteins S8 and S17. May interact with IF1 in the 30S initiation complex.

Its function is as follows. With S4 and S5 plays an important role in translational accuracy. In terms of biological role, interacts with and stabilizes bases of the 16S rRNA that are involved in tRNA selection in the A site and with the mRNA backbone. Located at the interface of the 30S and 50S subunits, it traverses the body of the 30S subunit contacting proteins on the other side and probably holding the rRNA structure together. The combined cluster of proteins S8, S12 and S17 appears to hold together the shoulder and platform of the 30S subunit. This chain is Small ribosomal subunit protein uS12, found in Caldanaerobacter subterraneus subsp. tengcongensis (strain DSM 15242 / JCM 11007 / NBRC 100824 / MB4) (Thermoanaerobacter tengcongensis).